The sequence spans 144 residues: Large ribosomal subunit protein uL16 (144 aa).

Residues 1 to 16 (MLVPKRVKHRKVQRGK) show a composition bias toward basic residues. Residues 1–20 (MLVPKRVKHRKVQRGKMRGE) form a disordered region.

This sequence belongs to the universal ribosomal protein uL16 family. Part of the 50S ribosomal subunit.

Functionally, binds 23S rRNA and is also seen to make contacts with the A and possibly P site tRNAs. This is Large ribosomal subunit protein uL16 from Limosilactobacillus fermentum (strain NBRC 3956 / LMG 18251) (Lactobacillus fermentum).